Here is a 440-residue protein sequence, read N- to C-terminus: Fibulin-7 (440 aa).

The N-terminal stretch at 1–24 (MGPGSQRALFLLLLLLASPGARAF) is a signal peptide. A coiled-coil region spans residues 28 to 73 (LNKQQLLTTIRQLQQLLKGQETRFTEGIRNMKSRLAALQNTVNKMT). One can recognise a Sushi domain in the interval 79 to 136 (VSCPALEAPPDGKKFGSKYLVDHEVYFTCNPGFQLVGPSSVVCLANGSWTGEQPRCRD). Disulfide bonds link Cys-81–Cys-121, Cys-107–Cys-134, Cys-140–Cys-151, Cys-145–Cys-160, Cys-162–Cys-171, Cys-229–Cys-245, Cys-241–Cys-254, Cys-256–Cys-269, Cys-275–Cys-288, Cys-282–Cys-297, and Cys-302–Cys-319. N-linked (GlcNAc...) asparagine glycosylation occurs at Asn-124. The EGF-like 1; calcium-binding domain maps to 136–172 (DISECSSQPCHNGGTCVEGINHYRCICPPGKTGNRCQ). The EGF-like 2; calcium-binding domain occupies 225-270 (DVNECEIYGQKGRPRLCMHACVNTPGSYRCTCPSGYRILADGKSCE). The EGF-like 3; calcium-binding domain occupies 271 to 320 (DVDECAGPQHMCPRGTTCINTGGGFQCVNPECPEGSGNISYVKTSPFQCE). An N-linked (GlcNAc...) asparagine glycan is attached at Asn-308.

The protein belongs to the fibulin family. Interacts with heparin, FBLN1, FN1 and DSPP. Preferentially binds dental mesenchyme cells and odontoblasts but not dental epithelial cells or nondental cells. Binding requires a heparan sulfate-containing receptor on the cell surface as well as an integrin. Post-translationally, N-glycosylated. As to expression, highly expressed in newborn incisors and molars. A weaker expression is seen in the brain, kidneys, muscles and bones.

It localises to the secreted. It is found in the extracellular space. The protein resides in the extracellular matrix. Its function is as follows. An adhesion molecule that interacts with extracellular matrix molecules in developing teeth and may play important roles in differentiation and maintenance of odontoblasts as well as in dentin formation. The polypeptide is Fibulin-7 (Fbln7) (Mus musculus (Mouse)).